A 542-amino-acid chain; its full sequence is CTP synthase (542 aa).

The amidoligase domain stretch occupies residues Met-1–Ile-265. Residue Ser-13 participates in CTP binding. Position 13 (Ser-13) interacts with UTP. Ser-14–Ile-19 is an ATP binding site. Tyr-54 provides a ligand contact to L-glutamine. Position 71 (Asp-71) interacts with ATP. 2 residues coordinate Mg(2+): Asp-71 and Glu-139. CTP contacts are provided by residues Asp-146–Glu-148, Lys-186–Gln-191, and Lys-222. Residues Lys-186–Gln-191 and Lys-222 each bind UTP. The region spanning Thr-291–Leu-541 is the Glutamine amidotransferase type-1 domain. L-glutamine is bound at residue Ala-353. Residue Cys-380 is the Nucleophile; for glutamine hydrolysis of the active site. Residues Phe-381–Gln-384, Glu-404, and Arg-469 each bind L-glutamine. Residues His-514 and Glu-516 contribute to the active site.

This sequence belongs to the CTP synthase family. In terms of assembly, homotetramer.

The catalysed reaction is UTP + L-glutamine + ATP + H2O = CTP + L-glutamate + ADP + phosphate + 2 H(+). The enzyme catalyses L-glutamine + H2O = L-glutamate + NH4(+). It catalyses the reaction UTP + NH4(+) + ATP = CTP + ADP + phosphate + 2 H(+). Its pathway is pyrimidine metabolism; CTP biosynthesis via de novo pathway; CTP from UDP: step 2/2. Its activity is regulated as follows. Allosterically activated by GTP, when glutamine is the substrate; GTP has no effect on the reaction when ammonia is the substrate. The allosteric effector GTP functions by stabilizing the protein conformation that binds the tetrahedral intermediate(s) formed during glutamine hydrolysis. Inhibited by the product CTP, via allosteric rather than competitive inhibition. Catalyzes the ATP-dependent amination of UTP to CTP with either L-glutamine or ammonia as the source of nitrogen. Regulates intracellular CTP levels through interactions with the four ribonucleotide triphosphates. The polypeptide is CTP synthase (Bartonella bacilliformis (strain ATCC 35685 / KC583 / Herrer 020/F12,63)).